The primary structure comprises 43 residues: Protein PsbN (43 aa).

The helical transmembrane segment at 3–23 threads the bilayer; the sequence is IATLVAIFISGLLVSFTGYAL.

The protein belongs to the PsbN family.

The protein resides in the plastid. Its subcellular location is the chloroplast thylakoid membrane. In terms of biological role, may play a role in photosystem I and II biogenesis. The polypeptide is Protein PsbN (Euonymus alatus (Burning bush)).